Consider the following 313-residue polypeptide: NADH-ubiquinone oxidoreductase chain 1 (313 aa).

Transmembrane regions (helical) follow at residues 7 to 27, 73 to 93, 104 to 124, 150 to 170, 175 to 195, 226 to 246, 250 to 270, and 293 to 313; these read LIGS…LTLL, IFYY…WMSM, LGVL…MVAG, LALI…LNFF, YMWF…SCLA, LIFL…SVIF, DIYS…FIWV, and MSLN…SMLF.

This sequence belongs to the complex I subunit 1 family.

It is found in the mitochondrion inner membrane. The catalysed reaction is a ubiquinone + NADH + 5 H(+)(in) = a ubiquinol + NAD(+) + 4 H(+)(out). Core subunit of the mitochondrial membrane respiratory chain NADH dehydrogenase (Complex I) that is believed to belong to the minimal assembly required for catalysis. Complex I functions in the transfer of electrons from NADH to the respiratory chain. The immediate electron acceptor for the enzyme is believed to be ubiquinone. The protein is NADH-ubiquinone oxidoreductase chain 1 of Aedes aegypti (Yellowfever mosquito).